Consider the following 206-residue polypeptide: Large ribosomal subunit protein uL4 (206 aa).

A disordered region spans residues 63–97 (MYKQKGTGRARHHSARAPQFRGGGKAHGPVVRSHE). A compositionally biased stretch (basic residues) spans 64–77 (YKQKGTGRARHHSA).

This sequence belongs to the universal ribosomal protein uL4 family. In terms of assembly, part of the 50S ribosomal subunit.

Functionally, one of the primary rRNA binding proteins, this protein initially binds near the 5'-end of the 23S rRNA. It is important during the early stages of 50S assembly. It makes multiple contacts with different domains of the 23S rRNA in the assembled 50S subunit and ribosome. Its function is as follows. Forms part of the polypeptide exit tunnel. In Rhizobium leguminosarum bv. trifolii (strain WSM2304), this protein is Large ribosomal subunit protein uL4.